The following is a 450-amino-acid chain: Probable malate:quinone oxidoreductase (450 aa).

Belongs to the MQO family. FAD is required as a cofactor.

It catalyses the reaction (S)-malate + a quinone = a quinol + oxaloacetate. Its pathway is carbohydrate metabolism; tricarboxylic acid cycle; oxaloacetate from (S)-malate (quinone route): step 1/1. In Helicobacter acinonychis (strain Sheeba), this protein is Probable malate:quinone oxidoreductase.